The primary structure comprises 73 residues: Ubiquitin-like protein 5 (73 aa).

Residues 1–73 form the Ubiquitin-like domain; it reads MIEITCNDRL…DGMNLELYYQ (73 aa).

It localises to the cytoplasm. This Drosophila melanogaster (Fruit fly) protein is Ubiquitin-like protein 5 (ubl).